The primary structure comprises 129 residues: Glycoprotein hormone alpha-2 (129 aa).

An N-terminal signal peptide occupies residues 1–23 (MPMASPQTLVLYLLVLAVTEAWG). Cystine bridges form between Cys31–Cys89, Cys48–Cys103, Cys57–Cys119, and Cys61–Cys121. N-linked (GlcNAc...) asparagine glycans are attached at residues Asn37 and Asn81.

This sequence belongs to the glycoprotein hormones subunit alpha family. Heterodimer with GPHB5; this heterodimer interacts with thyroid-stimulating hormone receptor (TSHR), and hence stimulates cAMP production. In terms of processing, glycosylated. In terms of tissue distribution, found in a variety of tissues.

The protein resides in the secreted. Functionally, functions as a heterodimeric glycoprotein hormone with GPHB5 able to bind and activate the thyroid-stimulating hormone receptor (TSHR), leading to increased cAMP production. Plays a central role in controlling thyroid cell metabolism. The polypeptide is Glycoprotein hormone alpha-2 (GPHA2) (Homo sapiens (Human)).